We begin with the raw amino-acid sequence, 290 residues long: MKNTFSRLFGFGDKESEFELQDESHEEIDKKVYEEIQEIPIVNITPNRYQPRTVFDDARIEELALTIRTHGLIQPIVVRQYEDDKYEIIAGERRFRAATKLGWEKVPAIIKNLNDTETASVALIENLQREELTAIEEAVAYQKLIELHNLTQEALAQRLGKGQSTIANKLRLLKLPEEIKNALLEKSITERHARALIPLKNEELQLKVLQEIVEKQLNVKQTEERIAKLLEEAKPKRKAKQKAVSRDTRIAMNTIRQSLQMVADSGLNVNSEEEEFDEYYQITIQIPKKK.

A DNA-binding region (H-T-H motif) is located at residues Glu153–Leu172.

This sequence belongs to the ParB family.

It is found in the cytoplasm. Its subcellular location is the nucleoid. Functionally, effects nucleoid occlusion by binding relatively nonspecifically to DNA and preventing the assembly of the division machinery in the vicinity of the nucleoid, especially under conditions that disturb the cell cycle. It helps to coordinate cell division and chromosome segregation by preventing the formation of the Z ring through the nucleoid, which would cause chromosome breakage. The protein is Nucleoid occlusion protein of Bacillus cereus (strain ATCC 10987 / NRS 248).